The primary structure comprises 481 residues: Glutamyl-tRNA(Gln) amidotransferase subunit A (481 aa).

Catalysis depends on charge relay system residues Lys-76 and Ser-151. Ser-175 (acyl-ester intermediate) is an active-site residue.

This sequence belongs to the amidase family. GatA subfamily. In terms of assembly, heterotrimer of A, B and C subunits.

The enzyme catalyses L-glutamyl-tRNA(Gln) + L-glutamine + ATP + H2O = L-glutaminyl-tRNA(Gln) + L-glutamate + ADP + phosphate + H(+). In terms of biological role, allows the formation of correctly charged Gln-tRNA(Gln) through the transamidation of misacylated Glu-tRNA(Gln) in organisms which lack glutaminyl-tRNA synthetase. The reaction takes place in the presence of glutamine and ATP through an activated gamma-phospho-Glu-tRNA(Gln). The protein is Glutamyl-tRNA(Gln) amidotransferase subunit A of Neisseria gonorrhoeae (strain ATCC 700825 / FA 1090).